The sequence spans 104 residues: MTNRLALSGTVCRMPLRKVSPSGIPHCQFVLEHRSVQEEAGFHRQAWCQMPVIVSGHENQAITHSITVGSRITVQGFISCHKAKNGLSKMVLHAEQIELIDSGD.

The SSB domain occupies 1 to 101 (MTNRLALSGT…LHAEQIELID (101 aa)).

This sequence belongs to the PriB family. In terms of assembly, homodimer. Interacts with PriA and DnaT. Component of the replication restart primosome. Primosome assembly occurs via a 'hand-off' mechanism. PriA binds to replication forks, subsequently PriB then DnaT bind; DnaT then displaces ssDNA to generate the helicase loading substrate.

In terms of biological role, involved in the restart of stalled replication forks, which reloads the replicative helicase on sites other than the origin of replication; the PriA-PriB pathway is the major replication restart pathway. During primosome assembly it facilitates complex formation between PriA and DnaT on DNA; stabilizes PriA on DNA. Stimulates the DNA unwinding activity of PriA helicase. The polypeptide is Replication restart protein PriB (Citrobacter koseri (strain ATCC BAA-895 / CDC 4225-83 / SGSC4696)).